The sequence spans 218 residues: OPA3-like protein (218 aa).

The stretch at 129 to 179 (NEIMEKQFVLQKKKNELQSSTEEIDSTEKDFDELHKVILKVERELHTLRQN) forms a coiled coil. Positions 175-218 (TLRQNTPSQNEQAEATPSKEIPRETVSEKADHPPSSNTKSVSTG) are disordered. Over residues 176-189 (LRQNTPSQNEQAEA) the composition is skewed to polar residues. Residues 194–206 (EIPRETVSEKADH) show a composition bias toward basic and acidic residues. Residues 208 to 218 (PSSNTKSVSTG) are compositionally biased toward polar residues.

The protein belongs to the OPA3 family.

This Schizosaccharomyces pombe (strain 972 / ATCC 24843) (Fission yeast) protein is OPA3-like protein.